The primary structure comprises 250 residues: tRNA (guanine-N(1)-)-methyltransferase (250 aa).

S-adenosyl-L-methionine is bound by residues G116 and 136–141 (IGDYVL).

Belongs to the RNA methyltransferase TrmD family. As to quaternary structure, homodimer.

Its subcellular location is the cytoplasm. The enzyme catalyses guanosine(37) in tRNA + S-adenosyl-L-methionine = N(1)-methylguanosine(37) in tRNA + S-adenosyl-L-homocysteine + H(+). Specifically methylates guanosine-37 in various tRNAs. This Pseudomonas fluorescens (strain ATCC BAA-477 / NRRL B-23932 / Pf-5) protein is tRNA (guanine-N(1)-)-methyltransferase.